The following is a 402-amino-acid chain: Imidazolonepropionase (402 aa).

Positions 66 and 68 each coordinate Fe(3+). Zn(2+) contacts are provided by H66 and H68. Positions 75, 138, and 171 each coordinate 4-imidazolone-5-propanoate. Y138 is an N-formimidoyl-L-glutamate binding site. H236 contacts Fe(3+). H236 is a Zn(2+) binding site. Q239 contacts 4-imidazolone-5-propanoate. Residue D311 participates in Fe(3+) binding. D311 serves as a coordination point for Zn(2+). N-formimidoyl-L-glutamate-binding residues include N313 and G315. T316 is a binding site for 4-imidazolone-5-propanoate.

The protein belongs to the metallo-dependent hydrolases superfamily. HutI family. Zn(2+) serves as cofactor. Requires Fe(3+) as cofactor.

Its subcellular location is the cytoplasm. The catalysed reaction is 4-imidazolone-5-propanoate + H2O = N-formimidoyl-L-glutamate. It functions in the pathway amino-acid degradation; L-histidine degradation into L-glutamate; N-formimidoyl-L-glutamate from L-histidine: step 3/3. Functionally, catalyzes the hydrolytic cleavage of the carbon-nitrogen bond in imidazolone-5-propanoate to yield N-formimidoyl-L-glutamate. It is the third step in the universal histidine degradation pathway. The sequence is that of Imidazolonepropionase from Vibrio cholerae serotype O1 (strain ATCC 39541 / Classical Ogawa 395 / O395).